Consider the following 98-residue polypeptide: ESAT-6-like protein EsxK (98 aa).

The protein belongs to the WXG100 family. CFP-10 subfamily. In terms of assembly, strongly interacts with EsxL to form a heterodimeric complex under reducing conditions.

The protein resides in the secreted. The protein is ESAT-6-like protein EsxK of Mycobacterium tuberculosis (strain CDC 1551 / Oshkosh).